A 590-amino-acid chain; its full sequence is Aspartate--tRNA(Asp/Asn) ligase (590 aa).

Glutamate 176 lines the L-aspartate pocket. Positions 200–203 are aspartate; sequence QLFK. Residues arginine 222 and histidine 451 each coordinate L-aspartate. ATP is bound at residue 222–224; that stretch reads RDE. Residue glutamate 485 coordinates ATP. An L-aspartate-binding site is contributed by arginine 492. Residue 537–540 coordinates ATP; the sequence is GIDR.

Belongs to the class-II aminoacyl-tRNA synthetase family. Type 1 subfamily. In terms of assembly, homodimer.

The protein resides in the cytoplasm. The catalysed reaction is tRNA(Asx) + L-aspartate + ATP = L-aspartyl-tRNA(Asx) + AMP + diphosphate. Aspartyl-tRNA synthetase with relaxed tRNA specificity since it is able to aspartylate not only its cognate tRNA(Asp) but also tRNA(Asn). Reaction proceeds in two steps: L-aspartate is first activated by ATP to form Asp-AMP and then transferred to the acceptor end of tRNA(Asp/Asn). In Ehrlichia ruminantium (strain Gardel), this protein is Aspartate--tRNA(Asp/Asn) ligase.